A 152-amino-acid polypeptide reads, in one-letter code: Large ribosomal subunit protein uL15 (152 aa).

Polar residues predominate over residues 1–12 (MTSTLNTLKSNT). Positions 1–57 (MTSTLNTLKSNTGSRKKKLRKGRGIAAGQGASCGFGMRGQKSRSGRPTRPGFEGGQM) are disordered. Residues 14–23 (SRKKKLRKGR) show a composition bias toward basic residues. Positions 25-37 (IAAGQGASCGFGM) are enriched in gly residues.

The protein belongs to the universal ribosomal protein uL15 family. In terms of assembly, part of the 50S ribosomal subunit.

In terms of biological role, binds to the 23S rRNA. The sequence is that of Large ribosomal subunit protein uL15 from Prochlorococcus marinus subsp. pastoris (strain CCMP1986 / NIES-2087 / MED4).